We begin with the raw amino-acid sequence, 171 residues long: S-ribosylhomocysteine lyase (171 aa).

Fe cation-binding residues include histidine 54, histidine 58, and cysteine 128.

The protein belongs to the LuxS family. As to quaternary structure, homodimer. Fe cation serves as cofactor.

The enzyme catalyses S-(5-deoxy-D-ribos-5-yl)-L-homocysteine = (S)-4,5-dihydroxypentane-2,3-dione + L-homocysteine. Its function is as follows. Involved in the synthesis of autoinducer 2 (AI-2) which is secreted by bacteria and is used to communicate both the cell density and the metabolic potential of the environment. The regulation of gene expression in response to changes in cell density is called quorum sensing. Catalyzes the transformation of S-ribosylhomocysteine (RHC) to homocysteine (HC) and 4,5-dihydroxy-2,3-pentadione (DPD). This is S-ribosylhomocysteine lyase from Shigella flexneri.